The primary structure comprises 440 residues: Chromosome partition protein MukF (440 aa).

The segment at 208–236 is leucine-zipper; sequence LSETSGTLRELQDTLDAAGDKLQANLLRI.

The protein belongs to the MukF family. In terms of assembly, interacts, and probably forms a ternary complex, with MukE and MukB via its C-terminal region. The complex formation is stimulated by calcium or magnesium. It is required for an interaction between MukE and MukB.

The protein resides in the cytoplasm. Its subcellular location is the nucleoid. Its function is as follows. Involved in chromosome condensation, segregation and cell cycle progression. May participate in facilitating chromosome segregation by condensation DNA from both sides of a centrally located replisome during cell division. Not required for mini-F plasmid partitioning. Probably acts via its interaction with MukB and MukE. Overexpression results in anucleate cells. It has a calcium binding activity. In Klebsiella pneumoniae (strain 342), this protein is Chromosome partition protein MukF.